The following is a 255-amino-acid chain: Ribonuclease HII (255 aa).

One can recognise an RNase H type-2 domain in the interval arginine 72–cysteine 255. Residues aspartate 78, glutamate 79, and aspartate 170 each coordinate a divalent metal cation.

This sequence belongs to the RNase HII family. It depends on Mn(2+) as a cofactor. The cofactor is Mg(2+).

It localises to the cytoplasm. The enzyme catalyses Endonucleolytic cleavage to 5'-phosphomonoester.. Functionally, endonuclease that specifically degrades the RNA of RNA-DNA hybrids. The chain is Ribonuclease HII from Bacillus velezensis (strain DSM 23117 / BGSC 10A6 / LMG 26770 / FZB42) (Bacillus amyloliquefaciens subsp. plantarum).